A 332-amino-acid chain; its full sequence is Protein EXORDIUM-like 6 (332 aa).

The first 27 residues, 1–27, serve as a signal peptide directing secretion; that stretch reads MAMASASSSSSSISVIIFLLLAPLCLS. N-linked (GlcNAc...) asparagine glycans are attached at residues Asn-36, Asn-102, and Asn-143.

It belongs to the EXORDIUM family.

The protein resides in the secreted. It is found in the extracellular space. The protein localises to the apoplast. Functionally, may play a role in a brassinosteroid-dependent regulation of growth and development. This Arabidopsis thaliana (Mouse-ear cress) protein is Protein EXORDIUM-like 6 (EXL6).